The sequence spans 198 residues: Ribonuclease HII (198 aa).

The RNase H type-2 domain maps to 10–198 (QLVAGVDEVG…PVKRALGLAS (189 aa)). Positions 16, 17, and 108 each coordinate a divalent metal cation.

This sequence belongs to the RNase HII family. The cofactor is Mn(2+). It depends on Mg(2+) as a cofactor.

It is found in the cytoplasm. It catalyses the reaction Endonucleolytic cleavage to 5'-phosphomonoester.. In terms of biological role, endonuclease that specifically degrades the RNA of RNA-DNA hybrids. The chain is Ribonuclease HII from Shigella dysenteriae serotype 1 (strain Sd197).